Consider the following 78-residue polypeptide: Serine--glyoxylate aminotransferase (78 aa).

The protein belongs to the class-V pyridoxal-phosphate-dependent aminotransferase family. As to quaternary structure, homodimer. Pyridoxal 5'-phosphate serves as cofactor. In terms of tissue distribution, expressed in leaves but not in root tissue or seedlings.

Its subcellular location is the peroxisome. The enzyme catalyses glyoxylate + L-serine = 3-hydroxypyruvate + glycine. It catalyses the reaction glyoxylate + L-alanine = glycine + pyruvate. With respect to regulation, inhibited by aminooxyacetate. In Triticum aestivum (Wheat), this protein is Serine--glyoxylate aminotransferase.